The chain runs to 689 residues: Centrosomal protein of 78 kDa (689 aa).

2 positions are modified to phosphoserine: S325 and S327. 3 disordered regions span residues 432-451, 563-589, and 614-689; these read SSEV…VPEK, PQMT…EPKQ, and DSFP…TESH. A coiled-coil region spans residues 450–505; sequence EKTSIEQEALQEKLEECLKQLKEERVIRLKVDKRVSELEHENAQLRNINFSLSEAL. Composition is skewed to basic and acidic residues over residues 573–587 and 666–689; these read PKEE…KPEP and QRKE…TESH.

Belongs to the CEP78 family. As to quaternary structure, interacts with PLK4. Interacts with FAM161A. Interacts with IFT20; regulating IFT20 stability and localization. Interacts with TTC21A; regulating TTC21A stability and localization. Interacts with USP16; promoting USP16-dependent deubiquitination of tektins. Interacts with DCAF1/VPRBP; promoting localization of the EDVP complex to centrosomes. Interacts with CEP350; promoting CEP78 localization to centrosome and centriole. Widely expressed. Expressed in different retinal cell types with higher expression in cone compared to rod cells (at protein level).

The protein resides in the cytoplasm. It localises to the cytoskeleton. Its subcellular location is the microtubule organizing center. It is found in the centrosome. The protein localises to the centriole. The protein resides in the cilium basal body. Functionally, centriole wall protein that localizes to mature centrioles and regulates centriole and cilia biogenesis. Involved in centrosome duplication: required for efficient PLK4 centrosomal localization and PLK4-induced overduplication of centrioles. Involved in cilium biogenesis and controls cilium length. Acts as a regulator of protein stability by preventing ubiquitination of centrosomal proteins, such as CCP110 and tektins. Associates with the EDVP complex, preventing ubiquitination and degradation of CCP110. Promotes deubiquitination of tektin proteins (TEKT1, TEKT2, TEK3, TEKT4 and TEKT5) via its interaction with USP16. The protein is Centrosomal protein of 78 kDa of Homo sapiens (Human).